The following is a 70-amino-acid chain: Guanine nucleotide-binding protein G(I)/G(S)/G(O) subunit gamma-8 (70 aa).

Position 67 is a cysteine methyl ester (Cys-67). Cys-67 carries the S-geranylgeranyl cysteine lipid modification. Positions 68–70 (TLL) are cleaved as a propeptide — removed in mature form.

Belongs to the G protein gamma family. G proteins are composed of 3 units, alpha, beta and gamma. As to expression, detected in the olfactory epithelium, the vomeronasal epithelium and, to a lesser extent, the olfactory bulb.

It localises to the cell membrane. Guanine nucleotide-binding proteins (G proteins) are involved as a modulator or transducer in various transmembrane signaling systems. The beta and gamma chains are required for the GTPase activity, for replacement of GDP by GTP, and for G protein-effector interaction. This subunit may have a very specific role in the development and turnover of olfactory and vomeronasal neurons. This is Guanine nucleotide-binding protein G(I)/G(S)/G(O) subunit gamma-8 (Gng8) from Rattus norvegicus (Rat).